The primary structure comprises 354 residues: Uroporphyrinogen decarboxylase (354 aa).

Residues 27–31 (RQAGR), Asp-77, Tyr-154, Ser-209, and His-327 each bind substrate.

Belongs to the uroporphyrinogen decarboxylase family. As to quaternary structure, homodimer.

Its subcellular location is the cytoplasm. The enzyme catalyses uroporphyrinogen III + 4 H(+) = coproporphyrinogen III + 4 CO2. The protein operates within porphyrin-containing compound metabolism; protoporphyrin-IX biosynthesis; coproporphyrinogen-III from 5-aminolevulinate: step 4/4. Functionally, catalyzes the decarboxylation of four acetate groups of uroporphyrinogen-III to yield coproporphyrinogen-III. This chain is Uroporphyrinogen decarboxylase, found in Shewanella putrefaciens (strain CN-32 / ATCC BAA-453).